Consider the following 317-residue polypeptide: 4-hydroxy-3-methylbut-2-enyl diphosphate reductase (317 aa).

Cysteine 12 provides a ligand contact to [4Fe-4S] cluster. (2E)-4-hydroxy-3-methylbut-2-enyl diphosphate-binding residues include histidine 41 and histidine 74. The dimethylallyl diphosphate site is built by histidine 41 and histidine 74. Isopentenyl diphosphate-binding residues include histidine 41 and histidine 74. Cysteine 97 lines the [4Fe-4S] cluster pocket. Histidine 125 provides a ligand contact to (2E)-4-hydroxy-3-methylbut-2-enyl diphosphate. Histidine 125 is a binding site for dimethylallyl diphosphate. An isopentenyl diphosphate-binding site is contributed by histidine 125. Glutamate 127 (proton donor) is an active-site residue. Threonine 168 is a binding site for (2E)-4-hydroxy-3-methylbut-2-enyl diphosphate. Position 198 (cysteine 198) interacts with [4Fe-4S] cluster. (2E)-4-hydroxy-3-methylbut-2-enyl diphosphate-binding residues include serine 226, serine 227, asparagine 228, and serine 270. Residues serine 226, serine 227, asparagine 228, and serine 270 each coordinate dimethylallyl diphosphate. Isopentenyl diphosphate-binding residues include serine 226, serine 227, asparagine 228, and serine 270.

The protein belongs to the IspH family. As to quaternary structure, homodimer. [4Fe-4S] cluster serves as cofactor.

The enzyme catalyses isopentenyl diphosphate + 2 oxidized [2Fe-2S]-[ferredoxin] + H2O = (2E)-4-hydroxy-3-methylbut-2-enyl diphosphate + 2 reduced [2Fe-2S]-[ferredoxin] + 2 H(+). The catalysed reaction is dimethylallyl diphosphate + 2 oxidized [2Fe-2S]-[ferredoxin] + H2O = (2E)-4-hydroxy-3-methylbut-2-enyl diphosphate + 2 reduced [2Fe-2S]-[ferredoxin] + 2 H(+). It participates in isoprenoid biosynthesis; dimethylallyl diphosphate biosynthesis; dimethylallyl diphosphate from (2E)-4-hydroxy-3-methylbutenyl diphosphate: step 1/1. The protein operates within isoprenoid biosynthesis; isopentenyl diphosphate biosynthesis via DXP pathway; isopentenyl diphosphate from 1-deoxy-D-xylulose 5-phosphate: step 6/6. Catalyzes the conversion of 1-hydroxy-2-methyl-2-(E)-butenyl 4-diphosphate (HMBPP) into a mixture of isopentenyl diphosphate (IPP) and dimethylallyl diphosphate (DMAPP). Acts in the terminal step of the DOXP/MEP pathway for isoprenoid precursor biosynthesis. In Yersinia enterocolitica serotype O:8 / biotype 1B (strain NCTC 13174 / 8081), this protein is 4-hydroxy-3-methylbut-2-enyl diphosphate reductase.